The chain runs to 608 residues: Epsin-3 (608 aa).

The a 1,2-diacyl-sn-glycero-3-phospho-(1D-myo-inositol-4,5-bisphosphate) site is built by Arg-8, Lys-11, Arg-25, Asn-30, Arg-63, and His-73. Positions 12 to 144 (NIVHNYSEAE…KDEERLRQER (133 aa)) constitute an ENTH domain. Disordered stretches follow at residues 150–266 (TKER…QSSI) and 281–475 (STHC…GPSA). Positions 174–189 (GSPSSYTSASSSPRYA) are enriched in low complexity. Phosphoserine occurs at positions 184 and 185. Residues 202–221 (EEELQLQLALAMSREEAEKG) enclose the UIM domain. 2 stretches are compositionally biased toward basic and acidic residues: residues 214-229 (SREE…KGDD) and 240-260 (GQRR…EKLK). 7 repeat units span residues 287–289 (DPW), 310–312 (DPW), 337–339 (EPW), 353–355 (DPW), 370–372 (DPW), 495–497 (NPF), and 508–510 (NPF). A 5 X 3 AA repeats of [DE]-P-W region spans residues 287–372 (DPWDIPGLRP…KLPSTGVDPW (86 aa)). A compositionally biased stretch (pro residues) spans 346 to 363 (PSGPPITDPWAPSSPTPK). Residues 495–607 (NPFLTGLSAP…LPPQAGTNPF (113 aa)) form a 3 X 3 AA repeats of N-P-F region. 2 disordered regions span residues 498–530 (LTGL…SPAL) and 575–608 (GAFA…NPFL). A compositionally biased stretch (pro residues) spans 578–588 (APPPASLPQPL). Copy 3 of the repeat occupies 605 to 607 (NPF).

This sequence belongs to the epsin family.

It localises to the cytoplasm. It is found in the cell cortex. The protein resides in the perinuclear region. The protein localises to the cytoplasmic vesicle. Its subcellular location is the clathrin-coated vesicle. It localises to the nucleus. The protein is Epsin-3 (Epn3) of Rattus norvegicus (Rat).